The chain runs to 306 residues: Ankyrin repeat domain-containing protein 23 (306 aa).

Residues 41-90 are a coiled coil; sequence QEAVAREKLKLEEEKRKKLERFNSSRLTLDNLTDLENLVQRRRKKRQRHK. The disordered stretch occupies residues 78-107; the sequence is LVQRRRKKRQRHKVPPREPESGAEPQPQVP. Over residues 80 to 91 the composition is skewed to basic residues; the sequence is QRRRKKRQRHKV. ANK repeat units follow at residues 144–173, 177–206, 210–239, and 243–272; these read LHRT…AIEV, LDRT…QVNA, IWST…HINA, and EGDT…KLGV. The segment at 179–196 is interaction with TTN; the sequence is RTPVFWACRGGHLDILKR.

In terms of assembly, interacts with titin/TTN and MYPN.

The protein resides in the nucleus. May be involved in the energy metabolism. Could be a molecular link between myofibrillar stretch-induced signaling pathways and muscle gene expression. The chain is Ankyrin repeat domain-containing protein 23 (Ankrd23) from Mus musculus (Mouse).